Consider the following 548-residue polypeptide: WEB family protein At1g12150 (548 aa).

Positions 71 to 544 (KEFMKIKQKL…ELQRWRQQEN (474 aa)) form a coiled coil. Residues 430 to 448 (VREEMKMISQKQESKKQDE) show a composition bias toward basic and acidic residues. Residues 430–455 (VREEMKMISQKQESKKQDEESSGSKI) form a disordered region.

It belongs to the WEB family.

This chain is WEB family protein At1g12150, found in Arabidopsis thaliana (Mouse-ear cress).